Reading from the N-terminus, the 50-residue chain is Tubulin alpha chain (50 aa).

Asn28 is a GTP binding site. Glu40 is an active-site residue.

This sequence belongs to the tubulin family. As to quaternary structure, dimer of alpha and beta chains. A typical microtubule is a hollow water-filled tube with an outer diameter of 25 nm and an inner diameter of 15 nM. Alpha-beta heterodimers associate head-to-tail to form protofilaments running lengthwise along the microtubule wall with the beta-tubulin subunit facing the microtubule plus end conferring a structural polarity. Microtubules usually have 13 protofilaments but different protofilament numbers can be found in some organisms and specialized cells. Requires Mg(2+) as cofactor.

Its subcellular location is the cytoplasm. It localises to the cytoskeleton. The catalysed reaction is GTP + H2O = GDP + phosphate + H(+). In terms of biological role, tubulin is the major constituent of microtubules, a cylinder consisting of laterally associated linear protofilaments composed of alpha- and beta-tubulin heterodimers. Microtubules grow by the addition of GTP-tubulin dimers to the microtubule end, where a stabilizing cap forms. Below the cap, tubulin dimers are in GDP-bound state, owing to GTPase activity of alpha-tubulin. In Populus euphratica (Euphrates poplar), this protein is Tubulin alpha chain.